Consider the following 390-residue polypeptide: Galactokinase (390 aa).

Residue 35–38 (EHTD) participates in substrate binding. 125–131 (GAGLSSS) contacts ATP. The Mg(2+) site is built by Ser131 and Glu163. The active-site Proton acceptor is the Asp175. Tyr224 is a substrate binding site.

It belongs to the GHMP kinase family. GalK subfamily.

The protein localises to the cytoplasm. It catalyses the reaction alpha-D-galactose + ATP = alpha-D-galactose 1-phosphate + ADP + H(+). The protein operates within carbohydrate metabolism; galactose metabolism. Functionally, catalyzes the transfer of the gamma-phosphate of ATP to D-galactose to form alpha-D-galactose-1-phosphate (Gal-1-P). In Proteus mirabilis (strain HI4320), this protein is Galactokinase.